A 312-amino-acid polypeptide reads, in one-letter code: MNNKTVITHFLLLGLPIPPEHQQLFFALFLIMYLTTFLGNLLIVVLVQLDSHLHTPMYLFLSNLSFSDLCFSSVTMLKLLQNIQSQVPSISYAGCLTQIFFFLLFGYLGNFLLVAMAYDRYVAICFPLHYTNIMSHKLCTCLLLVFWIMTSSHAMMHTLLAARLSFCENNVLLNFFCDLFVLLKLACSDTYVNELMIHIMGVIIIVIPFVLIVISYAKIISSILKVPSTQSIHKVFSTCGSHLSVVSLFYGTIIGLYLCPSGDNFSLKGSAMAMMYTVVTPMLNPFIYSLRNRDMKQALIRVTCSKKISLPW.

Topologically, residues 1 to 23 are extracellular; sequence MNNKTVITHFLLLGLPIPPEHQQ. A glycan (N-linked (GlcNAc...) asparagine) is linked at N3. The chain crosses the membrane as a helical span at residues 24-48; that stretch reads LFFALFLIMYLTTFLGNLLIVVLVQ. The Cytoplasmic portion of the chain corresponds to 49–55; the sequence is LDSHLHT. A helical transmembrane segment spans residues 56–77; it reads PMYLFLSNLSFSDLCFSSVTML. Topologically, residues 78-98 are extracellular; sequence KLLQNIQSQVPSISYAGCLTQ. C95 and C187 form a disulfide bridge. A helical transmembrane segment spans residues 99–118; that stretch reads IFFFLLFGYLGNFLLVAMAY. Over 119–137 the chain is Cytoplasmic; sequence DRYVAICFPLHYTNIMSHK. The chain crosses the membrane as a helical span at residues 138 to 156; the sequence is LCTCLLLVFWIMTSSHAMM. The Extracellular portion of the chain corresponds to 157–194; sequence HTLLAARLSFCENNVLLNFFCDLFVLLKLACSDTYVNE. A helical membrane pass occupies residues 195–217; the sequence is LMIHIMGVIIIVIPFVLIVISYA. Residues 218-234 lie on the Cytoplasmic side of the membrane; that stretch reads KIISSILKVPSTQSIHK. The helical transmembrane segment at 235–258 threads the bilayer; that stretch reads VFSTCGSHLSVVSLFYGTIIGLYL. At 259–270 the chain is on the extracellular side; it reads CPSGDNFSLKGS. Residues 271–290 traverse the membrane as a helical segment; sequence AMAMMYTVVTPMLNPFIYSL. Over 291-312 the chain is Cytoplasmic; it reads RNRDMKQALIRVTCSKKISLPW.

It belongs to the G-protein coupled receptor 1 family. Olfactory epithelium.

It is found in the cell membrane. In terms of biological role, odorant receptor. The protein is Olfactory receptor 1493 (Olr1493) of Rattus norvegicus (Rat).